The following is a 326-amino-acid chain: MTKFKLEYIWLDGYTPVPNLRGKTQIKEFDEFPTLEQLPLWGFDGSSTMQAEGSSDCVLKPVAIYPDPARTNGALVMCEVMMPDGHAHASNARATILDDEDAWFGFEQEYFFYQNGRPLGFPEQGYPAPQPYYTGVGYSNVGDVAREIVEEHLDLCLAAGINHEGINAEVAKGQWEFQIFGKGSKKAADQIWMARYLLQRLTEKYGIDIEYHCKPLGDTDWNGSGMHCNFSTKYLREVGGKEYFEALMASSDKNLMDHIAVYGPDNDKRLTGKHETAPWNKFSYGVADRGASIRVPHSFIKNDYKGYLEDRRPNSQGDPYQIVRRF.

Residues 4–85 form the GS beta-grasp domain; the sequence is FKLEYIWLDG…VMCEVMMPDG (82 aa). The GS catalytic domain maps to 83–326; that stretch reads PDGHAHASNA…GDPYQIVRRF (244 aa). Positions 107 and 109 each coordinate Mg(2+). E164 provides a ligand contact to ATP. Mg(2+)-binding residues include E169 and E176. Position 275 (E275) interacts with L-glutamate.

The protein belongs to the glutamine synthetase family. As to quaternary structure, homooctamer and homotetramer. Requires Mg(2+) as cofactor.

The protein localises to the cytoplasm. It catalyses the reaction L-glutamate + NH4(+) + ATP = L-glutamine + ADP + phosphate + H(+). Its activity is regulated as follows. Transferase activity is inhibited by NH(4)Cl. Its function is as follows. Catalyzes the ATP-dependent biosynthesis of glutamine from glutamate and ammonia. This Rhizobium leguminosarum bv. phaseoli protein is Glutamine synthetase.